Here is a 203-residue protein sequence, read N- to C-terminus: V-type ATP synthase subunit D (203 aa).

The protein belongs to the V-ATPase D subunit family.

Its function is as follows. Produces ATP from ADP in the presence of a proton gradient across the membrane. This Chlamydia muridarum (strain MoPn / Nigg) protein is V-type ATP synthase subunit D (atpD).